The following is a 616-amino-acid chain: Proline--tRNA ligase (616 aa).

This sequence belongs to the class-II aminoacyl-tRNA synthetase family. ProS type 1 subfamily. In terms of assembly, homodimer.

Its subcellular location is the cytoplasm. It catalyses the reaction tRNA(Pro) + L-proline + ATP = L-prolyl-tRNA(Pro) + AMP + diphosphate. In terms of biological role, catalyzes the attachment of proline to tRNA(Pro) in a two-step reaction: proline is first activated by ATP to form Pro-AMP and then transferred to the acceptor end of tRNA(Pro). As ProRS can inadvertently accommodate and process non-cognate amino acids such as alanine and cysteine, to avoid such errors it has two additional distinct editing activities against alanine. One activity is designated as 'pretransfer' editing and involves the tRNA(Pro)-independent hydrolysis of activated Ala-AMP. The other activity is designated 'posttransfer' editing and involves deacylation of mischarged Ala-tRNA(Pro). The misacylated Cys-tRNA(Pro) is not edited by ProRS. The polypeptide is Proline--tRNA ligase (Streptococcus mutans serotype c (strain ATCC 700610 / UA159)).